The chain runs to 461 residues: tRNA-2-methylthio-N(6)-dimethylallyladenosine synthase (461 aa).

One can recognise an MTTase N-terminal domain in the interval 25–143 (PTYSIITHGC…LPYLIDRHLS (119 aa)). [4Fe-4S] cluster is bound by residues Cys-34, Cys-70, Cys-104, Cys-179, Cys-183, and Cys-186. Residues 165-395 (RDNEYVGYVN…LDVAYPIFYE (231 aa)) form the Radical SAM core domain. Residues 398–461 (KSYLGTIQEV…SFALTGEMVD (64 aa)) enclose the TRAM domain.

It belongs to the methylthiotransferase family. MiaB subfamily. Monomer. Requires [4Fe-4S] cluster as cofactor.

Its subcellular location is the cytoplasm. The enzyme catalyses N(6)-dimethylallyladenosine(37) in tRNA + (sulfur carrier)-SH + AH2 + 2 S-adenosyl-L-methionine = 2-methylsulfanyl-N(6)-dimethylallyladenosine(37) in tRNA + (sulfur carrier)-H + 5'-deoxyadenosine + L-methionine + A + S-adenosyl-L-homocysteine + 2 H(+). Its function is as follows. Catalyzes the methylthiolation of N6-(dimethylallyl)adenosine (i(6)A), leading to the formation of 2-methylthio-N6-(dimethylallyl)adenosine (ms(2)i(6)A) at position 37 in tRNAs that read codons beginning with uridine. The polypeptide is tRNA-2-methylthio-N(6)-dimethylallyladenosine synthase (Finegoldia magna (strain ATCC 29328 / DSM 20472 / WAL 2508) (Peptostreptococcus magnus)).